A 121-amino-acid chain; its full sequence is Small ribosomal subunit protein bS16 (121 aa).

Residues 85 to 110 are compositionally biased toward basic and acidic residues; that stretch reads REARNNPKKAEPGKKAQERAAERAAK. The segment at 85–121 is disordered; that stretch reads REARNNPKKAEPGKKAQERAAERAAKAAEASEAASAE. Residues 111-121 are compositionally biased toward low complexity; the sequence is AAEASEAASAE.

This sequence belongs to the bacterial ribosomal protein bS16 family.

This chain is Small ribosomal subunit protein bS16, found in Azorhizobium caulinodans (strain ATCC 43989 / DSM 5975 / JCM 20966 / LMG 6465 / NBRC 14845 / NCIMB 13405 / ORS 571).